Consider the following 174-residue polypeptide: Transcriptional repressor NrdR (174 aa).

Residues 3–34 (CPFCQHNDTRVIDSRVSEDGTTIRRRRECEAC) fold into a zinc finger. Residues 49–139 (PTVVKSDGGR…VYRSFQDVAD (91 aa)) form the ATP-cone domain.

Belongs to the NrdR family. Zn(2+) serves as cofactor.

In terms of biological role, negatively regulates transcription of bacterial ribonucleotide reductase nrd genes and operons by binding to NrdR-boxes. The chain is Transcriptional repressor NrdR from Xanthomonas axonopodis pv. citri (strain 306).